Here is a 396-residue protein sequence, read N- to C-terminus: MELPRLENVDLSGKRVFLRVDFNVPVENGKVTDKTRIEKTLPTIELLIKKGARIIIASHLGRPKGQVNPEFSLAPVVETFQSLVKSKVYFSKTVIGEDAIKLSKELKNGEILVIENVRFHKEEEENDPGFSKKLAALADIYVNDAFGAAHRAHSSTEGIARLLPAYAGLLMHKEILELSALLHKPARPFVAIIGGSKVSTKIKVLTNLFDKVNHLLIGGGMAYTFLKSRAIPIGNSLVEKEFEVQAFQLIEKAGVAGIDLQLPVDHIIGDQFNEKAKTKSVDKMGILDGWMGMDIGSKTVSNYEKIIKNAGTIFWNGPMGVFEMDKFASGTMAIAKAVAKSKAKTVVGGGDSIAAINKARVADKITHISTGGGASLEFMEGRKLPGVEALKKKTSE.

Substrate-binding positions include 21–23, Arg-36, 59–62, Arg-118, and Arg-151; these read DFN and HLGR. ATP contacts are provided by residues Lys-201, Gly-292, Glu-323, and 349 to 352; that span reads GGDS.

The protein belongs to the phosphoglycerate kinase family. As to quaternary structure, monomer.

It localises to the cytoplasm. The enzyme catalyses (2R)-3-phosphoglycerate + ATP = (2R)-3-phospho-glyceroyl phosphate + ADP. The protein operates within carbohydrate degradation; glycolysis; pyruvate from D-glyceraldehyde 3-phosphate: step 2/5. This Leptospira interrogans serogroup Icterohaemorrhagiae serovar copenhageni (strain Fiocruz L1-130) protein is Phosphoglycerate kinase.